The primary structure comprises 586 residues: Probable transporter AQR1 (586 aa).

Disordered regions lie at residues 1–44 (MSRS…FEGA) and 61–82 (EGDL…PTQQ). Over 1–99 (MSRSNSIYTE…PYTLLSYGQK (99 aa)) the chain is Extracellular. The span at 19–40 (NEQHLTREYTKPDGQTKSEKLN) shows a compositional bias: basic and acidic residues. The helical transmembrane segment at 100 to 120 (WGMVAILTMCGFWSSLGSPIY) threads the bilayer. Topologically, residues 121 to 139 (YPALRQLEKQFNVDENMVN) are cytoplasmic. A helical transmembrane segment spans residues 140 to 160 (VTVVVYLLFQGISPTVSGGLA). The Extracellular portion of the chain corresponds to 161 to 166 (DCFGRR). The helical transmembrane segment at 167–187 (PIILAGMLIYVIASIGLACAP) threads the bilayer. S188 is a topological domain (cytoplasmic). Residues 189–209 (YGVIIFLRCIQSIGISPTIAI) form a helical membrane-spanning segment. The Extracellular segment spans residues 210-225 (SSGVVGDFTLKHERGT). Residues 226–246 (FVGATSGFVLLGQCFGSLIGA) form a helical membrane-spanning segment. At 247 to 255 (VLTARWDWR) the chain is on the cytoplasmic side. A helical transmembrane segment spans residues 256–276 (AIFWFLTIGCGSCFLIAFLIL). Residues 277-334 (PETKRTIAGNLSIKPKRFINRAPIFLLGPVRRRFKYDNPDYETLDPTIPKLDLSSAGK) lie on the Extracellular side of the membrane. A helical transmembrane segment spans residues 335 to 355 (ILVLPEIILSLFPSGLLFAMW). Over 356 to 374 (TLMLSSISSGLSVAPYNYH) the chain is Cytoplasmic. The chain crosses the membrane as a helical span at residues 375–395 (LVIIGVCYLPGGIGGLMGSFF). Topologically, residues 396–433 (TGRIIDMYFKRKIKKFEQDKANGLIPQDAEINMFKVRL) are extracellular. A helical membrane pass occupies residues 434 to 454 (VCLLPQNFLAVVAYLLFGWSI). The Cytoplasmic portion of the chain corresponds to 455–459 (DKGWR). Residues 460-480 (IESILITSFVCSYCAMSTLST) traverse the membrane as a helical segment. Over 481–523 (STTLLVDLYPTKSSTASSCFNFVRCSLSTIFMGCFAKMKAAMT) the chain is Extracellular. The helical transmembrane segment at 524–544 (VGGTFTFLCALVFFFNFLMFI) threads the bilayer. The Cytoplasmic segment spans residues 545–586 (PMKYGMKWREDRLLKQQRQSWLNTLAVKAKKGTKRDQNDNHN).

Belongs to the major facilitator superfamily. CAR1 family.

It localises to the membrane. Its function is as follows. Probable transporter that confers resistance to short-chain monocarboxylic acids and quinidine. The protein is Probable transporter AQR1 (AQR1) of Saccharomyces cerevisiae (strain ATCC 204508 / S288c) (Baker's yeast).